Here is a 271-residue protein sequence, read N- to C-terminus: Pyrroline-5-carboxylate reductase (271 aa).

This sequence belongs to the pyrroline-5-carboxylate reductase family.

It is found in the cytoplasm. It carries out the reaction L-proline + NADP(+) = (S)-1-pyrroline-5-carboxylate + NADPH + 2 H(+). The catalysed reaction is L-proline + NAD(+) = (S)-1-pyrroline-5-carboxylate + NADH + 2 H(+). It functions in the pathway amino-acid biosynthesis; L-proline biosynthesis; L-proline from L-glutamate 5-semialdehyde: step 1/1. In terms of biological role, catalyzes the reduction of 1-pyrroline-5-carboxylate (PCA) to L-proline. This is Pyrroline-5-carboxylate reductase from Staphylococcus epidermidis (strain ATCC 35984 / DSM 28319 / BCRC 17069 / CCUG 31568 / BM 3577 / RP62A).